The following is a 411-amino-acid chain: Serine hydroxymethyltransferase (411 aa).

Residues Leu119 and 123-125 (GHL) contribute to the (6S)-5,6,7,8-tetrahydrofolate site. Residue Lys228 is modified to N6-(pyridoxal phosphate)lysine. Position 351–353 (351–353 (SPF)) interacts with (6S)-5,6,7,8-tetrahydrofolate.

It belongs to the SHMT family. Homodimer. Requires pyridoxal 5'-phosphate as cofactor.

Its subcellular location is the cytoplasm. It catalyses the reaction (6R)-5,10-methylene-5,6,7,8-tetrahydrofolate + glycine + H2O = (6S)-5,6,7,8-tetrahydrofolate + L-serine. It participates in one-carbon metabolism; tetrahydrofolate interconversion. The protein operates within amino-acid biosynthesis; glycine biosynthesis; glycine from L-serine: step 1/1. Catalyzes the reversible interconversion of serine and glycine with tetrahydrofolate (THF) serving as the one-carbon carrier. This reaction serves as the major source of one-carbon groups required for the biosynthesis of purines, thymidylate, methionine, and other important biomolecules. Also exhibits THF-independent aldolase activity toward beta-hydroxyamino acids, producing glycine and aldehydes, via a retro-aldol mechanism. This is Serine hydroxymethyltransferase from Clostridium beijerinckii (strain ATCC 51743 / NCIMB 8052) (Clostridium acetobutylicum).